The following is a 181-amino-acid chain: RNA pyrophosphohydrolase (181 aa).

The Nudix hydrolase domain maps to 6 to 150 (GYRPNVGIII…KCEVYRCALK (145 aa)). A Nudix box motif is present at residues 38–59 (GGIKEGETPEQAMYRELYEEVG).

Belongs to the Nudix hydrolase family. RppH subfamily. A divalent metal cation is required as a cofactor.

Its function is as follows. Accelerates the degradation of transcripts by removing pyrophosphate from the 5'-end of triphosphorylated RNA, leading to a more labile monophosphorylated state that can stimulate subsequent ribonuclease cleavage. The chain is RNA pyrophosphohydrolase from Psychromonas ingrahamii (strain DSM 17664 / CCUG 51855 / 37).